Reading from the N-terminus, the 282-residue chain is 4-hydroxy-tetrahydrodipicolinate reductase (282 aa).

NAD(+) is bound by residues 14–19 (GAMGRM) and 115–117 (GTT). His-171 (proton donor/acceptor) is an active-site residue. His-172 contacts (S)-2,3,4,5-tetrahydrodipicolinate. Lys-175 (proton donor) is an active-site residue. 181 to 182 (GT) serves as a coordination point for (S)-2,3,4,5-tetrahydrodipicolinate.

The protein belongs to the DapB family.

Its subcellular location is the cytoplasm. The enzyme catalyses (S)-2,3,4,5-tetrahydrodipicolinate + NAD(+) + H2O = (2S,4S)-4-hydroxy-2,3,4,5-tetrahydrodipicolinate + NADH + H(+). The catalysed reaction is (S)-2,3,4,5-tetrahydrodipicolinate + NADP(+) + H2O = (2S,4S)-4-hydroxy-2,3,4,5-tetrahydrodipicolinate + NADPH + H(+). It participates in amino-acid biosynthesis; L-lysine biosynthesis via DAP pathway; (S)-tetrahydrodipicolinate from L-aspartate: step 4/4. Catalyzes the conversion of 4-hydroxy-tetrahydrodipicolinate (HTPA) to tetrahydrodipicolinate. This is 4-hydroxy-tetrahydrodipicolinate reductase from Prochlorococcus marinus (strain NATL2A).